The sequence spans 134 residues: Sec-independent protein translocase protein TatB (134 aa).

Residues 2-22 (FDGIGFMELLLIGILGLVVLG) form a helical membrane-spanning segment. The interval 90-134 (AESVNRPYKVEDTSPVAPKASPDESPSVVEAKSSEATSENSSTPK) is disordered. The segment covering 123–134 (SEATSENSSTPK) has biased composition (polar residues).

It belongs to the TatB family. The Tat system comprises two distinct complexes: a TatABC complex, containing multiple copies of TatA, TatB and TatC subunits, and a separate TatA complex, containing only TatA subunits. Substrates initially bind to the TatABC complex, which probably triggers association of the separate TatA complex to form the active translocon.

It is found in the cell inner membrane. Part of the twin-arginine translocation (Tat) system that transports large folded proteins containing a characteristic twin-arginine motif in their signal peptide across membranes. Together with TatC, TatB is part of a receptor directly interacting with Tat signal peptides. TatB may form an oligomeric binding site that transiently accommodates folded Tat precursor proteins before their translocation. This Shewanella frigidimarina (strain NCIMB 400) protein is Sec-independent protein translocase protein TatB.